Reading from the N-terminus, the 811-residue chain is TLR4 interactor with leucine rich repeats (811 aa).

An N-terminal signal peptide occupies residues 1 to 25 (MEGVGAVRFWLVVCGCLAFPPRAES). The 32-residue stretch at 26 to 57 (VCPERCDCQHPQHLLCTNRGLRAVPKTSSLPS) folds into the LRRNT domain. Over 26–696 (VCPERCDCQH…AGGRGGVDYQ (671 aa)) the chain is Extracellular. 12 LRR repeats span residues 61–81 (VLTYSLGGNFITNITAFDFHR), 84–105 (QLRRLDLQYNQIRSLHPKTFEK), 108–129 (RLEELYLGNNLLQALAPGTLAP), 132–153 (KLRILYANGNEIGRLSRGSFEG), 156–177 (SLVKLRLDGNVLGALPDAVFAP), 180–201 (NLLYLHLEANRIRFLGKNAFTQ), 204–223 (KLRFLNLSANELQPSLRHAA), 230–251 (SLSTLILSANSLQHLGPRVFQH), 254–275 (RLGLLSLSGNQLTHLAPEAFWG), 278–298 (ALRELRLEGNRLNQLPLTLLE), 302–323 (SLEALDLSGNELSALHPATFGH), and 326–347 (RLRELSLRDNALSALSGDIFAA). N-linked (GlcNAc...) asparagine glycosylation occurs at N73. The LRRCT domain occupies 359-416 (NGWTCDCRLRGLKRWMGNWHSQGRLLTVFVQCRHPPALRGKYLDYLDDQLLQNGSCVD). N-linked (GlcNAc...) asparagine glycosylation is present at N411. Disordered regions lie at residues 414–460 (CVDP…QQRG) and 486–562 (RRGP…QQGR). Positions 421–430 (PTAGSRQWPI) are enriched in polar residues. Composition is skewed to low complexity over residues 440 to 460 (PPAGLAQELPLQPQPQPQQRG) and 494 to 508 (QSPSAAAASGSAPQS). Basic and acidic residues predominate over residues 510-519 (DLHEKPERGR). The segment covering 524–545 (NLPQTEPTPTSEPASGTPSARD) has biased composition (polar residues). N589 is a glycosylation site (N-linked (GlcNAc...) asparagine). Residues 697-717 (LLTLVLLAINALLVLLALAAW) form a helical membrane-spanning segment. Topologically, residues 718–809 (GSRWLRRKLR…RREDHLLQRF (92 aa)) are cytoplasmic. S798 is subject to Phosphoserine.

Belongs to the lipopolysaccharide (LPS) receptor, a multi-protein complex containing at least CD14, MD-2 and TLR4. Interacts with TLR4; this interaction is greatly enhanced following LPS stimulation. Interacts with LPS. In terms of processing, N-glycolysaled. In terms of tissue distribution, highly expressed in cortical astrocytes and in cerebellar granule neurons.

Its subcellular location is the membrane. Its function is as follows. Component of the TLR4 signaling complex. Mediates the innate immune response to bacterial lipopolysaccharide (LPS) leading to cytokine secretion and the inflammatory response. The chain is TLR4 interactor with leucine rich repeats (Tril) from Rattus norvegicus (Rat).